Here is a 271-residue protein sequence, read N- to C-terminus: Collectin-11 (271 aa).

An N-terminal signal peptide occupies residues 1-25; sequence MVGEKLVAYMLVSVLGLALLRSVFG. In terms of domain architecture, Collagen-like spans 44–103; the sequence is GEAGEKGEKGAPGRPGRVGPTGEQGPPGDKGQKGSPGRYGKMGPTGPKGLKGDMGDPGPK. Residues 46–112 form a disordered region; that stretch reads AGEKGEKGAP…KGPNGEPGVP (67 aa). Residues 124-148 adopt a coiled-coil conformation; it reads EMDIQVVQLTNELKFIKNAVAGIKE. One can recognise a C-type lectin domain in the interval 149–265; sequence TDSKVYLLVK…CQLTMYFVCE (117 aa). 2 disulfide bridges follow: cysteine 170–cysteine 264 and cysteine 242–cysteine 256. Residue arginine 200 participates in a carbohydrate binding. Ca(2+) contacts are provided by aspartate 207, glutamate 211, glutamate 232, asparagine 234, asparagine 235, aspartate 238, glutamate 240, and aspartate 241. Glutamate 240 contacts a carbohydrate. A carbohydrate contacts are provided by residues glutamate 244 and 252–254; that span reads IDV. Aspartate 253 serves as a coordination point for Ca(2+).

It belongs to the COLEC10/COLEC11 family. In terms of assembly, homotrimer; disulfide-linked. Interacts with MASP1; probably triggers the lectin pathway of complement.

The protein resides in the secreted. Lectin that plays a role in innate immunity, apoptosis and embryogenesis. Calcium-dependent lectin that binds self and non-self glycoproteins presenting high mannose oligosaccharides with at least one terminal alpha-1,2-linked mannose epitope. Primarily recognizes the terminal disaccharide of the glycan. Also recognizes a subset of fucosylated glycans and lipopolysaccharides. Plays a role in innate immunity through its ability to bind non-self sugars presented by microorganisms and to activate the complement through the recruitment of MAPS1. Also plays a role in apoptosis through its ability to bind in a calcium-independent manner the DNA present at the surface of apoptotic cells and to activate the complement in response to this binding. Finally, plays a role in development, probably serving as a guidance cue during the migration of neural crest cells and other cell types during embryogenesis. The sequence is that of Collectin-11 (colec11) from Danio rerio (Zebrafish).